The sequence spans 284 residues: Bifunctional protein FolD (284 aa).

Residues 163–165 (GRS) and Ser188 contribute to the NADP(+) site.

This sequence belongs to the tetrahydrofolate dehydrogenase/cyclohydrolase family. As to quaternary structure, homodimer.

The catalysed reaction is (6R)-5,10-methylene-5,6,7,8-tetrahydrofolate + NADP(+) = (6R)-5,10-methenyltetrahydrofolate + NADPH. The enzyme catalyses (6R)-5,10-methenyltetrahydrofolate + H2O = (6R)-10-formyltetrahydrofolate + H(+). Its pathway is one-carbon metabolism; tetrahydrofolate interconversion. Catalyzes the oxidation of 5,10-methylenetetrahydrofolate to 5,10-methenyltetrahydrofolate and then the hydrolysis of 5,10-methenyltetrahydrofolate to 10-formyltetrahydrofolate. The chain is Bifunctional protein FolD from Lactococcus lactis subsp. lactis (strain IL1403) (Streptococcus lactis).